The sequence spans 323 residues: Putative HTH-type transcriptional regulatory protein Hlac_0273 (323 aa).

Residues 132–189 (LADEREERGWSLGRLATELGVSRRTVSKYEDGMNASIEVAIQLEDLFNEPFSSPVDVL) enclose the HTH cro/C1-type domain. The H-T-H motif DNA-binding region spans 143–162 (LGRLATELGVSRRTVSKYED). Positions 188-211 (VLDGAGEVRDADPTPSAPETDPDD) are disordered.

This chain is Putative HTH-type transcriptional regulatory protein Hlac_0273, found in Halorubrum lacusprofundi (strain ATCC 49239 / DSM 5036 / JCM 8891 / ACAM 34).